We begin with the raw amino-acid sequence, 102 residues long: Cytochrome b (102 aa).

3 helical membrane-spanning segments follow: residues 1–21 (FGSL…FLAM), 45–66 (WLIR…YLHI), and 81–101 (WNIG…GYVL). The heme b site is built by His-51 and His-65.

This sequence belongs to the cytochrome b family. In terms of assembly, the cytochrome bc1 complex contains 3 respiratory subunits (MT-CYB, CYC1 and UQCRFS1), 2 core proteins (UQCRC1 and UQCRC2) and probably 6 low-molecular weight proteins. The cofactor is heme b.

The protein localises to the mitochondrion inner membrane. Component of the ubiquinol-cytochrome c reductase complex (complex III or cytochrome b-c1 complex) that is part of the mitochondrial respiratory chain. The b-c1 complex mediates electron transfer from ubiquinol to cytochrome c. Contributes to the generation of a proton gradient across the mitochondrial membrane that is then used for ATP synthesis. The protein is Cytochrome b (mt-cyb) of Megalops atlanticus (Tarpon).